The following is a 435-amino-acid chain: MNLASQSVDAGAGQLLFANFNQDNTSLAVGSKSGYKFFSLSSVDKLEQIYECTDTEDVCIVERLFSSSLVAIVSLKAPRKLKVCHFKKGTEICNYSYSNTTLAVKLNRQRLIVCLEESLYIHNIRDMKVLHTIRETPPNPSGLCSLSINGENCYLAYPGSASIGEVQVFDTVNLRAANMIPAHDSPLAALAFDASGTKLATASEKGTVIRVFSIPEGQKLFEFRRGVKRCVSICSLAFSMDSIFLSASSNTETVHIFKLETIKEKPPEEPTSWTGYFGRVIMASTSYLPSQVTEMFNQGRAFATVRLPFCGHKNICALATIQKISRLLVGAADGYLYIYNFDPQEGGECTLMKQHKLDGSMEPSSEILESSSHDRQVGAQTYSATVTKTYPPPSPTRHAYADDLGAVGGASEEDEMGNLRLDEDNENPPMILQTE.

The stretch at 182 to 222 (AHDSPLAALAFDASGTKLATASEKGTVIRVFSIPEGQKLFE) is one WD 1 repeat. A L/FRRG motif motif is present at residues 223–226 (FRRG). WD repeat units follow at residues 228-267 (KRCV…EKPP) and 311-349 (GHKN…GGEC). Positions 386–435 (VTKTYPPPSPTRHAYADDLGAVGGASEEDEMGNLRLDEDNENPPMILQTE) are disordered.

Belongs to the WD repeat PROPPIN family.

Its subcellular location is the preautophagosomal structure membrane. In terms of biological role, component of the autophagy machinery that controls the major intracellular degradation process by which cytoplasmic materials are packaged into autophagosomes and delivered to lysosomes for degradation. Involved in an early step of the formation of preautophagosomal structures. In Xenopus laevis (African clawed frog), this protein is WD repeat domain phosphoinositide-interacting protein 2 (wipi2).